The chain runs to 498 residues: ATP synthase subunit beta, chloroplastic (498 aa).

ATP is bound at residue 172-179 (GGAGVGKT).

Belongs to the ATPase alpha/beta chains family. In terms of assembly, F-type ATPases have 2 components, CF(1) - the catalytic core - and CF(0) - the membrane proton channel. CF(1) has five subunits: alpha(3), beta(3), gamma(1), delta(1), epsilon(1). CF(0) has four main subunits: a(1), b(1), b'(1) and c(9-12).

Its subcellular location is the plastid. It is found in the chloroplast thylakoid membrane. The catalysed reaction is ATP + H2O + 4 H(+)(in) = ADP + phosphate + 5 H(+)(out). Functionally, produces ATP from ADP in the presence of a proton gradient across the membrane. The catalytic sites are hosted primarily by the beta subunits. The sequence is that of ATP synthase subunit beta, chloroplastic from Nicotiana tomentosiformis (Tobacco).